Reading from the N-terminus, the 57-residue chain is Lantibiotic nisin-Z (57 aa).

A propeptide spanning residues 1-23 is cleaved from the precursor; the sequence is MSTKDFNLDLVSVSKKDSGASPR. T25 is modified (2,3-didehydrobutyrine). The segment at residues 26-30 is a cross-link (lanthionine (Ser-Cys)); it reads SISLC. A 2,3-didehydroalanine (Ser) modification is found at S28. 4 consecutive cross-links (beta-methyllanthionine (Thr-Cys)) follow at residues 31-34, 36-42, 46-49, and 48-51; these read TPGC, TGALMGC, TATC, and TCNC. S56 is subject to 2,3-didehydroalanine (Ser).

This sequence belongs to the type A lantibiotic family. Post-translationally, maturation of lantibiotics involves the enzymatic conversion of Thr, and Ser into dehydrated AA and the formation of thioether bonds with cysteine. This is followed by membrane translocation and cleavage of the modified precursor. In terms of processing, the structure of the 2,3-didehydrobutyrine is not discussed in PubMed:15361862. It is probably the Z-isomer by similarity.

Its function is as follows. Lanthionine-containing peptide antibiotic (lantibiotic) active on Gram-positive bacteria. The bactericidal activity of lantibiotics is based on depolarization of energized bacterial cytoplasmic membranes, initiated by the formation of aqueous transmembrane pores. This chain is Lantibiotic nisin-Z (nisZ), found in Lactococcus lactis subsp. lactis (Streptococcus lactis).